The chain runs to 378 residues: Histidine decarboxylase (378 aa).

A substrate-binding site is contributed by His-120. At Lys-233 the chain carries N6-(pyridoxal phosphate)lysine.

It belongs to the group II decarboxylase family. Homotetramer. Pyridoxal 5'-phosphate serves as cofactor.

The catalysed reaction is L-histidine + H(+) = histamine + CO2. This Klebsiella aerogenes (Enterobacter aerogenes) protein is Histidine decarboxylase (hdc).